The primary structure comprises 400 residues: GDNF family receptor alpha-3 (400 aa).

The N-terminal stretch at 1-31 (MVRPLNPRPLPPVVLMLLLLLPPSPLPLAAG) is a signal peptide. C51 and C57 are oxidised to a cystine. N95 and N148 each carry an N-linked (GlcNAc...) asparagine glycan. 10 cysteine pairs are disulfide-bonded: C162-C218, C169-C175, C186-C196, C191-C239, C220-C227, C248-C316, C255-C261, C272-C288, C281-C340, and C318-C328. N309 is a glycosylation site (N-linked (GlcNAc...) asparagine). N374 carries GPI-anchor amidated asparagine lipidation. The propeptide at 375 to 400 (PAVRPQPWVPSLFSCTLPLILLLSLW) is removed in mature form.

This sequence belongs to the GDNFR family. As to quaternary structure, interacts with ARTN ligand and RET: forms a 2:2:2 ternary complex composed of ARTN ligand, GFRA3 and RET receptor. Interacts with SORL1. Post-translationally, N-glycosylated. In terms of tissue distribution, widely expressed in adult and fetus which exhibit a similar pattern. Essentially not expressed in the central nervous system, but highly expressed in several sensory and sympathetic ganglia of the peripheral nervous system. Moderate expression in many non-neuronal tissues, particularly those of the digestive and urogenital systems, but high expression in stomach and appendix. Several types of glandular tissues show low expression. Very low or no expression detected in the hematopoietic system.

It localises to the cell membrane. In terms of biological role, receptor for artemin (ARTN), a growth factor that supports the survival of sensory and sympathetic peripheral neurons. ARTN-binding leads to autophosphorylation and activation of the RET receptor. This chain is GDNF family receptor alpha-3 (GFRA3), found in Homo sapiens (Human).